Here is a 282-residue protein sequence, read N- to C-terminus: MKDITLPPPTSASCLTGAISVNTEAVLSPMQHTSALHVRDFASLCSQNLKANVLLNSDDHEVPIHQKNPAAIMQNIDSNIKQMATDWGMSIEEVEVIIGREKGIVEPSCGVTANAIMKLFLDKDGFSYCFENEQTLSLEQLQERLSCMPECKSFVLRVNDGALGHAYIVDIPKGENSCRPAFLYQSDLGEGVTRKLRFEDWMTHKALTPILLDDICNYFSCMSQNKTDLEQIATLFDIDGNVKMLRKENIQYQKHDNFSFQLFEYDTDNIEKNIEIIKSLCS.

A translocation domain (TD) region spans residues 1–16 (MKDITLPPPTSASCLT). Residues Cys109, His165, and Gln185 contribute to the active site.

Belongs to the Cif family.

The protein localises to the secreted. Its subcellular location is the host nucleus. It carries out the reaction L-glutaminyl-[protein] + H2O = L-glutamyl-[protein] + NH4(+). Functionally, protein-glutamine deamidase effector that inhibits the host cell cycle and other key cellular processes such as the actin network and programmed-cell death. Acts by mediating the side chain deamidation of 'Gln-40' of host NEDD8, converting it to glutamate, thereby abolishing the activity of cullin-RING-based E3 ubiquitin-protein ligase complexes (CRL complexes). Inactivation of CRL complexes prevents ubiquitination and subsequent degradation of the cyclin-dependent kinase inhibitors CDKN1A/p21 and CDKN1B/p27, leading to G1 and G2 cell cycle arrests in host cells. Also able to catalyze deamidation of 'Gln-40' of host ubiquitin in vitro; however, NEDD8 constitutes the preferred substrate in vivo. This chain is Protein-glutamine deamidase Cif, found in Escherichia coli.